The primary structure comprises 132 residues: Large ribosomal subunit protein uL14 (132 aa).

The protein belongs to the universal ribosomal protein uL14 family. As to quaternary structure, part of the 50S ribosomal subunit. Forms a cluster with proteins L3 and L24e, part of which may contact the 16S rRNA in 2 intersubunit bridges.

Its function is as follows. Binds to 23S rRNA. Forms part of two intersubunit bridges in the 70S ribosome. The sequence is that of Large ribosomal subunit protein uL14 from Picrophilus torridus (strain ATCC 700027 / DSM 9790 / JCM 10055 / NBRC 100828 / KAW 2/3).